Consider the following 334-residue polypeptide: Mediator of RNA polymerase II transcription subunit 4 (334 aa).

Residues 76-100 (LIRTLKAHVEKRDEVIQQVENNLKA) are a coiled coil. The span at 188–203 (SSAQKPIIASPSASSS) shows a compositional bias: low complexity. Disordered stretches follow at residues 188–234 (SSAQ…GYGA) and 252–334 (EKQW…GRNK). 2 stretches are compositionally biased toward polar residues: residues 204-225 (NGGT…TNGD) and 264-282 (ATSS…SSPS).

It belongs to the Mediator complex subunit 4 family. As to quaternary structure, component of the Mediator complex.

The protein resides in the nucleus. Functionally, component of the Mediator complex, a coactivator involved in the regulated transcription of nearly all RNA polymerase II-dependent genes. Mediator functions as a bridge to convey information from gene-specific regulatory proteins to the basal RNA polymerase II transcription machinery. Mediator is recruited to promoters by direct interactions with regulatory proteins and serves as a scaffold for the assembly of a functional preinitiation complex with RNA polymerase II and the general transcription factors. This chain is Mediator of RNA polymerase II transcription subunit 4 (mdt-4), found in Caenorhabditis briggsae.